Consider the following 1161-residue polypeptide: Nardilysin (1161 aa).

A signal peptide spans methionine 1–arginine 18. Disordered regions lie at residues methionine 49–serine 103 and valine 130–threonine 218. Phosphoserine occurs at positions 85, 91, and 93. The segment covering threonine 138 to glutamate 209 has biased composition (acidic residues). Histidine 244 is a Zn(2+) binding site. The Proton acceptor role is filled by glutamate 247. Zn(2+) contacts are provided by histidine 248 and glutamate 325.

Belongs to the peptidase M16 family. Interacts with BACE1 and NRG1. Zn(2+) serves as cofactor. As to expression, highly expressed in brain of early postnatal mice but expressed at a lower level in the brains of adult mice. Expression is high in cortical neurons, and lower in neurons in the striatum. Very low expression detected in the corpus callosum. Also expressed in the gray matter in spinal cord and dorsal root ganglia.

It localises to the mitochondrion. It is found in the cell projection. The protein resides in the dendrite. The enzyme catalyses Hydrolysis of polypeptides, preferably at -Xaa-|-Arg-Lys-, and less commonly at -Arg-|-Arg-Xaa-, in which Xaa is not Arg or Lys.. Functionally, cleaves peptide substrates on the N-terminus of arginine residues in dibasic pairs. Is a critical activator of BACE1- and ADAM17-mediated pro-neuregulin ectodomain shedding, involved in the positive regulation of axonal maturation and myelination. Required for proper functioning of 2-oxoglutarate dehydrogenase (OGDH). This chain is Nardilysin, found in Mus musculus (Mouse).